We begin with the raw amino-acid sequence, 157 residues long: Transcription elongation factor GreA (157 aa).

This sequence belongs to the GreA/GreB family.

Its function is as follows. Necessary for efficient RNA polymerase transcription elongation past template-encoded arresting sites. The arresting sites in DNA have the property of trapping a certain fraction of elongating RNA polymerases that pass through, resulting in locked ternary complexes. Cleavage of the nascent transcript by cleavage factors such as GreA or GreB allows the resumption of elongation from the new 3'terminus. GreA releases sequences of 2 to 3 nucleotides. The chain is Transcription elongation factor GreA from Brucella abortus (strain S19).